A 353-amino-acid chain; its full sequence is ATP-dependent kinase YFH7 (353 aa).

31-39 (GSPGSGKST) lines the ATP pocket.

The protein belongs to the YFH7 family.

In terms of biological role, ATP-dependent kinase that could be involved in endoplasmic reticulum membrane assembly. This is ATP-dependent kinase YFH7 (YFH7) from Saccharomyces cerevisiae (strain Lalvin EC1118 / Prise de mousse) (Baker's yeast).